Reading from the N-terminus, the 140-residue chain is C-type lectin 6 (140 aa).

Residues 1-23 (MGRLVFVSFGLLVVFLSLSGTGA) form the signal peptide. 3 disulfides stabilise this stretch: Cys25/Cys36, Cys53/Cys138, and Cys115/Cys130. Residues 32 to 139 (YEGHCYRVFQ…CSKTHNVICK (108 aa)) enclose the C-type lectin domain.

It belongs to the snaclec family. As to quaternary structure, heteromultimer; disulfide-linked. As to expression, expressed by the venom gland.

It localises to the secreted. Its function is as follows. Interferes with one step of hemostasis (modulation of platelet aggregation, or coagulation cascade, for example). The polypeptide is C-type lectin 6 (Crotalus adamanteus (Eastern diamondback rattlesnake)).